The primary structure comprises 762 residues: Ribosome-releasing factor 2, mitochondrial (762 aa).

Residues 1–35 (MLLSLTFPVLRGCTGHLVNRSLQAPRWRVTWKRSY) constitute a mitochondrion transit peptide. The 288-residue stretch at 54–341 (SKIRNIGIMA…AITAYLPAPN (288 aa)) folds into the tr-type G domain. GTP is bound by residues 63–70 (AHIDAGKT), 127–131 (DTPGH), and 181–184 (NKMD).

The protein belongs to the TRAFAC class translation factor GTPase superfamily. Classic translation factor GTPase family. EF-G/EF-2 subfamily.

Its subcellular location is the mitochondrion. The enzyme catalyses GTP + H2O = GDP + phosphate + H(+). Functionally, mitochondrial GTPase that mediates the disassembly of ribosomes from messenger RNA at the termination of mitochondrial protein biosynthesis. Acts in collaboration with mrrf. GTP hydrolysis follows the ribosome disassembly and probably occurs on the ribosome large subunit. Not involved in the GTP-dependent ribosomal translocation step during translation elongation. In Danio rerio (Zebrafish), this protein is Ribosome-releasing factor 2, mitochondrial (gfm2).